We begin with the raw amino-acid sequence, 435 residues long: Glutamine synthetase (435 aa).

The region spanning 12–94 (KSIKYFMISY…VAADCVMDDR (83 aa)) is the GS beta-grasp domain. The GS catalytic domain maps to 100 to 435 (PRVVLKRLVA…QWERDSTLDI (336 aa)). The Mg(2+) site is built by Glu-123, Glu-125, Glu-180, and Glu-187. Residue Gly-232 participates in L-glutamate binding. A Mg(2+)-binding site is contributed by His-236. Ser-240 serves as a coordination point for ATP. Residues Arg-291 and Arg-315 each contribute to the L-glutamate site. ATP-binding residues include Arg-315 and Arg-320. Glu-328 is a binding site for Mg(2+). Arg-330 is an L-glutamate binding site.

The protein belongs to the glutamine synthetase family. Homooctamer. Mg(2+) is required as a cofactor.

The enzyme catalyses L-glutamate + NH4(+) + ATP = L-glutamine + ADP + phosphate + H(+). Its function is as follows. Catalyzes the ATP-dependent biosynthesis of glutamine from glutamate and ammonia. The sequence is that of Glutamine synthetase from Rhizobium leguminosarum bv. phaseoli.